The sequence spans 296 residues: Large ribosomal subunit protein uL15m (296 aa).

A mitochondrion-targeting transit peptide spans 1-21; the sequence is MAGPLQGGGARALDLLRGLPR. The segment at 22-66 is disordered; it reads VSLANLKPNPGSKKPERRPRGRRRGRKCGRGHKGERQRGTRPRLG. The span at 36–52 shows a compositional bias: basic residues; the sequence is PERRPRGRRRGRKCGRG.

The protein belongs to the universal ribosomal protein uL15 family. In terms of assembly, component of the mitochondrial large ribosomal subunit (mt-LSU). Mature mammalian 55S mitochondrial ribosomes consist of a small (28S) and a large (39S) subunit. The 28S small subunit contains a 12S ribosomal RNA (12S mt-rRNA) and 30 different proteins. The 39S large subunit contains a 16S rRNA (16S mt-rRNA), a copy of mitochondrial valine transfer RNA (mt-tRNA(Val)), which plays an integral structural role, and 52 different proteins.

It is found in the mitochondrion. The chain is Large ribosomal subunit protein uL15m (MRPL15) from Homo sapiens (Human).